The primary structure comprises 78 residues: Large ribosomal subunit protein bL28 (78 aa).

This sequence belongs to the bacterial ribosomal protein bL28 family.

This Prochlorococcus marinus (strain MIT 9312) protein is Large ribosomal subunit protein bL28.